Here is a 312-residue protein sequence, read N- to C-terminus: Urease accessory protein UreD (312 aa).

The segment at 1-50 is disordered; the sequence is MRPLAPDARCAPSRPGRGPWYARRPVTTPSDPPAALREPPPPARRAGKAG.

This sequence belongs to the UreD family. In terms of assembly, ureD, UreF and UreG form a complex that acts as a GTP-hydrolysis-dependent molecular chaperone, activating the urease apoprotein by helping to assemble the nickel containing metallocenter of UreC. The UreE protein probably delivers the nickel.

The protein resides in the cytoplasm. Required for maturation of urease via the functional incorporation of the urease nickel metallocenter. This is Urease accessory protein UreD from Sorangium cellulosum (strain So ce56) (Polyangium cellulosum (strain So ce56)).